A 238-amino-acid chain; its full sequence is MRPSGRQPDQTRDIKITKNYTKHAEGSVLVEFGDTKVICTATVENGVPRFLRGEDQGWVTAEYGMLPRATGTRNQREAARGKQGGRTLEIQRLIGRSLRAAVDLKKMPDISITIDCDVIQADGGTRTASITGGFVAMADAINSLLAKGQLKNNPILHKVAAISVGVYEGVPVVDLDYDEDSKAETDMNVVMTDQDGFIEVQGTAEAAPFSSAELTAMLDLAGKGIRQLFVAQEEVLQS.

Phosphate contacts are provided by residues Arg-86 and 124–126; that span reads GTR.

It belongs to the RNase PH family. In terms of assembly, homohexameric ring arranged as a trimer of dimers.

It carries out the reaction tRNA(n+1) + phosphate = tRNA(n) + a ribonucleoside 5'-diphosphate. Phosphorolytic 3'-5' exoribonuclease that plays an important role in tRNA 3'-end maturation. Removes nucleotide residues following the 3'-CCA terminus of tRNAs; can also add nucleotides to the ends of RNA molecules by using nucleoside diphosphates as substrates, but this may not be physiologically important. Probably plays a role in initiation of 16S rRNA degradation (leading to ribosome degradation) during starvation. This is Ribonuclease PH from Hahella chejuensis (strain KCTC 2396).